Reading from the N-terminus, the 303-residue chain is Phosphatidylglycerol--prolipoprotein diacylglyceryl transferase (303 aa).

The next 3 helical transmembrane spans lie at 18 to 38 (LGTL…LIGL), 50 to 70 (INPG…IFGA), and 106 to 126 (IWNG…SIIL). R154 provides a ligand contact to a 1,2-diacyl-sn-glycero-3-phospho-(1'-sn-glycerol). Transmembrane regions (helical) follow at residues 193 to 213 (PTFL…IFLF), 223 to 243 (LPSG…RIWI), and 266 to 286 (IAQL…WWIY).

Belongs to the Lgt family.

The protein localises to the cell inner membrane. The enzyme catalyses L-cysteinyl-[prolipoprotein] + a 1,2-diacyl-sn-glycero-3-phospho-(1'-sn-glycerol) = an S-1,2-diacyl-sn-glyceryl-L-cysteinyl-[prolipoprotein] + sn-glycerol 1-phosphate + H(+). Its pathway is protein modification; lipoprotein biosynthesis (diacylglyceryl transfer). Functionally, catalyzes the transfer of the diacylglyceryl group from phosphatidylglycerol to the sulfhydryl group of the N-terminal cysteine of a prolipoprotein, the first step in the formation of mature lipoproteins. In Prochlorococcus marinus (strain SARG / CCMP1375 / SS120), this protein is Phosphatidylglycerol--prolipoprotein diacylglyceryl transferase.